Consider the following 1109-residue polypeptide: ABC transporter G family member 28 (1109 aa).

The next 2 membrane-spanning stretches (helical) occupy residues 5 to 25 (NSYF…LILQ) and 291 to 311 (NITA…IILY). Residues 325–411 (QAKSREKAVQ…DTKKGKKKEK (87 aa)) form a disordered region. The segment covering 339 to 357 (SQSREKWKSAKDIAKKHAT) has biased composition (basic and acidic residues). Residues 499-741 (VAFKDLSITL…FSSLGIVVPE (243 aa)) enclose the ABC transporter domain. 533 to 540 (GPSGAGKT) contacts ATP. One can recognise an ABC transmembrane type-2 domain in the interval 859 to 1056 (QQYRYFLGRL…ALEAFVVSNA (198 aa)). 6 helical membrane passes run 879–899 (LAVD…LAKV), 904–924 (FGAM…KITA), 954–974 (TVDH…FYFF), 986–1006 (VVLI…AILF), 1008–1028 (PGPA…IATS), and 1084–1104 (CLVF…FCMV).

It belongs to the ABC transporter superfamily. ABCG family. Eye pigment precursor importer (TC 3.A.1.204) subfamily.

The protein resides in the membrane. This is ABC transporter G family member 28 (ABCG28) from Arabidopsis thaliana (Mouse-ear cress).